The following is a 910-amino-acid chain: MKLTPMMRQYFEIKENYKDCILFFRLGDFYEMFFEDAETAARELELVLTGRDCGLEKRAPMCGIPFHASNSYIGRLVAKGYKVAICEQVEDPKFAKGIVKRDVIKVITPGTYTDSSFVEETKNNYIMTIYADLERNRCSLAITDISTGDFLATEGELEKGVILDEISKFNPKEIILLDSLDQELIKDITLTTPALISRKPIEYFEENFEEVLNNQFGEKSNSLSLMVKKSSNALVKYILDTQKISLTNINDIEVYSLVDFMTIDLSSRRNLELTENLREKSKKGSLLWVLDKTETSMGSRMLRRWIEEPLVNKEKITLRLNAVEELFNDLSLNDSLKEALHDIYDIERILGKISNKNANAKDLIALKTSIGKIPNVKGIIENCTSSLLKNYHHNLDDLRDIYDLLEKSIKEDPSLTLKDGDLIKDGFNGEIDELRLAKTNGKDWISSLENREREFTGIKSLKVGFNKVFGYYIEISKANYSSIPEGRYIRKQTLANAERFITPELKEIEEKLLGASEKLCSLEYDIFLDIRNEVENHIDRLKTTAKIIAELDCISNLAFVALENDFIKPEINEDGETKIENGRHPVVEKVIPKGEFIPNDTIINKDDNQLLIITGPNMAGKSTYMRQVAIITLMCQIGSFVPASKANISVVDKIFTRIGASDDLAGGKSTFMVEMWEVSNILKNATENSLVLLDEVGRGTSTYDGLSIAWSVIEYICKNKNLRCKTLFATHYHELTKLEGEIHGVRNYSVAVKEVDNNIIFLRKIIEGGADQSYGIEVAKLAGIPDEVINRAKEILETLEMESSKDNLDLALKEVNASKEDIEEASITTSYEVKETLVEEDKIEIKEEVISKASEAKTHKKEDDQIQLDFSAIGKDNLIKELSEVDILSLNPMEAMNRLYALVKEAKNLI.

615–622 provides a ligand contact to ATP; that stretch reads GPNMAGKS.

It belongs to the DNA mismatch repair MutS family.

Its function is as follows. This protein is involved in the repair of mismatches in DNA. It is possible that it carries out the mismatch recognition step. This protein has a weak ATPase activity. This Clostridium perfringens (strain ATCC 13124 / DSM 756 / JCM 1290 / NCIMB 6125 / NCTC 8237 / Type A) protein is DNA mismatch repair protein MutS.